Consider the following 920-residue polypeptide: Urea transporter 2 (920 aa).

The interval 25 to 57 (FTSPSWPSTSPDTHPALPLLEMPEEKDLRSSNE) is disordered. A compositionally biased stretch (low complexity) spans 26-39 (TSPSWPSTSPDTHP). Positions 47–57 (PEEKDLRSSNE) are enriched in basic and acidic residues. Helical transmembrane passes span 151–170 (WWTI…ALAL), 176–196 (AIAS…MAVF), 204–224 (WWLL…SSAL), 233–253 (LPVF…ATGH), 272–291 (ITWT…VGVG), 302–322 (GGVF…HAAI), 346–366 (WSYN…ALTW), 370–390 (LLAL…SNIM), and 392–412 (VVGV…FLLL). The interval 446–467 (EKAPSGGGGEHPPTAGPKVEEG) is disordered. Serine 477 carries the phosphoserine modification. 4 helical membrane-spanning segments follow: residues 600–620 (GILI…SGCL), 638–658 (AIAA…MAVF), 666–686 (WWLL…SSAL), and 695–715 (LPVF…ATGH). A glycan (N-linked (GlcNAc...) asparagine) is linked at asparagine 733. Helical transmembrane passes span 764–784 (GGIF…HAAI), 803–823 (IYFG…GGMF), 832–852 (LLAI…ANML), and 854–874 (VFGL…FLLL).

This sequence belongs to the urea transporter family. As to quaternary structure, interacts with SNAPIN which enhances its urea transport activity. Epressed in the inner medulla of the kidney (at protein level). As to expression, expressed in the kidney.

The protein localises to the apical cell membrane. The protein resides in the cell membrane. The catalysed reaction is urea(in) = urea(out). Inhibited by phloretin. Functionally, mediates the transport of urea driven by a concentration gradient across the cell membrane of the renal inner medullary collecting duct which is critical to the urinary concentrating mechanism. In terms of biological role, mediates the transport of urea driven by a concentration gradient across the cell membrane of the kidney inner medullary collecting duct which is critical to the urinary concentrating mechanism. This chain is Urea transporter 2 (SLC14A2), found in Homo sapiens (Human).